The sequence spans 151 residues: Transcription antitermination protein NusB (151 aa).

The protein belongs to the NusB family.

Its function is as follows. Involved in transcription antitermination. Required for transcription of ribosomal RNA (rRNA) genes. Binds specifically to the boxA antiterminator sequence of the ribosomal RNA (rrn) operons. This Photobacterium profundum (strain SS9) protein is Transcription antitermination protein NusB.